The sequence spans 651 residues: Acetyl-coenzyme A synthetase (651 aa).

Residues 190-193, Thr312, and Asn336 contribute to the CoA site; that span reads RGGK. Residues 388–390, 412–417, Asp501, and Arg516 each bind ATP; these read GEP and DTWWQT. Residue Ser524 participates in CoA binding. Arg527 lines the ATP pocket. 3 residues coordinate Mg(2+): Val538, His540, and Val543. Arg585 is a CoA binding site. Position 610 is an N6-acetyllysine (Lys610).

Belongs to the ATP-dependent AMP-binding enzyme family. It depends on Mg(2+) as a cofactor. Post-translationally, acetylated. Deacetylation by the SIR2-homolog deacetylase activates the enzyme.

It catalyses the reaction acetate + ATP + CoA = acetyl-CoA + AMP + diphosphate. Functionally, catalyzes the conversion of acetate into acetyl-CoA (AcCoA), an essential intermediate at the junction of anabolic and catabolic pathways. AcsA undergoes a two-step reaction. In the first half reaction, AcsA combines acetate with ATP to form acetyl-adenylate (AcAMP) intermediate. In the second half reaction, it can then transfer the acetyl group from AcAMP to the sulfhydryl group of CoA, forming the product AcCoA. In Mesorhizobium japonicum (strain LMG 29417 / CECT 9101 / MAFF 303099) (Mesorhizobium loti (strain MAFF 303099)), this protein is Acetyl-coenzyme A synthetase.